The following is a 488-amino-acid chain: Intron-encoded DNA endonuclease I-AniI (488 aa).

The tract at residues 1–169 (MRILKSHPLL…DIVEFIWGGL (169 aa)) is cobA exon 1 encoded. The interval 170–488 (YTDEPQCGDV…SEKIKIPSNY (319 aa)) is cobA intron encoded.

This sequence in the C-terminal section; belongs to the LAGLIDADG endonuclease family. In terms of assembly, homodimer. Mg(2+) is required as a cofactor. In terms of processing, the mature protein may arise from proteolytic cleavage of an in-frame translation of cobA exon 1 plus intron, containing the I-AniI open reading frame. Cleavage may take place close to Met-213 resulting in an active endonuclease/maturase of about 30 kDa.

It is found in the mitochondrion. Mitochondrial DNA endonuclease and mRNA maturase involved in intron homing and required for splicing of the cytochrome b (cobA) gene intron, containing its own coding sequence. The protein stimulates the intrinsic ribozyme activity of the intron through binding to and stabilizing specific secondary and tertiary structure elements in the RNA. As an endonuclease it introduces a specific double-strand break at the junction of the two exons the cobA gene and thus mediates the insertion of an intron, containing its own coding sequence (group I intron), into an intronless gene. Recognizes with limited specificity and cleaves the sequence 5'-GAGGAGGTTTCTCTGTA-3'. The proteins RNA and DNA recognition and binding surfaces are independent. This chain is Intron-encoded DNA endonuclease I-AniI (I-AniI), found in Emericella nidulans (Aspergillus nidulans).